We begin with the raw amino-acid sequence, 397 residues long: Phosphoglycerate kinase (397 aa).

Residues 21-23 (DFN), Arg-36, 59-62 (HCGR), Arg-118, and Arg-151 each bind substrate. ATP contacts are provided by residues Lys-201, Glu-323, and 353–356 (GGDT).

It belongs to the phosphoglycerate kinase family. In terms of assembly, monomer.

Its subcellular location is the cytoplasm. The catalysed reaction is (2R)-3-phosphoglycerate + ATP = (2R)-3-phospho-glyceroyl phosphate + ADP. It participates in carbohydrate degradation; glycolysis; pyruvate from D-glyceraldehyde 3-phosphate: step 2/5. The sequence is that of Phosphoglycerate kinase from Bartonella tribocorum (strain CIP 105476 / IBS 506).